A 103-amino-acid polypeptide reads, in one-letter code: Large ribosomal subunit protein uL24 (103 aa).

It belongs to the universal ribosomal protein uL24 family. Part of the 50S ribosomal subunit.

One of two assembly initiator proteins, it binds directly to the 5'-end of the 23S rRNA, where it nucleates assembly of the 50S subunit. Functionally, one of the proteins that surrounds the polypeptide exit tunnel on the outside of the subunit. This Agathobacter rectalis (strain ATCC 33656 / DSM 3377 / JCM 17463 / KCTC 5835 / VPI 0990) (Eubacterium rectale) protein is Large ribosomal subunit protein uL24.